Consider the following 149-residue polypeptide: UPF0178 protein CPR_2251 (149 aa).

It belongs to the UPF0178 family.

The sequence is that of UPF0178 protein CPR_2251 from Clostridium perfringens (strain SM101 / Type A).